Here is a 385-residue protein sequence, read N- to C-terminus: Protein delta homolog 1 (385 aa).

An N-terminal signal peptide occupies residues 1–23; the sequence is MIATGALLRVLLLLLAFGHSTYG. EGF-like domains lie at 24 to 55, 53 to 86, 88 to 125, 127 to 168, 172 to 208, and 210 to 247; these read AECD…PLCD, LCDK…KFCE, DVRA…KDCQ, KAGP…NFCE, ATNS…KTCS, and PVSN…PTCA. Residues 24–305 are Extracellular-facing; sequence AECDPPCDPQ…KSTPLLTEGQ (282 aa). 12 disulfides stabilise this stretch: cysteine 26–cysteine 37, cysteine 30–cysteine 43, cysteine 45–cysteine 54, cysteine 57–cysteine 68, cysteine 63–cysteine 74, cysteine 76–cysteine 85, cysteine 92–cysteine 103, cysteine 97–cysteine 113, cysteine 115–cysteine 124, cysteine 131–cysteine 144, cysteine 138–cysteine 156, and cysteine 158–cysteine 167. Residue serine 94 is glycosylated (O-linked (GalNAc...) serine). An N-linked (GlcNAc...) asparagine glycan is attached at asparagine 100. The N-linked (GlcNAc...) asparagine; atypical; partial glycan is linked to asparagine 165. Asparagine 174 is a glycosylation site (N-linked (GlcNAc...) asparagine; atypical). 6 disulfides stabilise this stretch: cysteine 176-cysteine 187, cysteine 181-cysteine 196, cysteine 198-cysteine 207, cysteine 214-cysteine 225, cysteine 219-cysteine 235, and cysteine 237-cysteine 246. An O-linked (GalNAc...) serine glycan is attached at serine 216. O-linked (GalNAc...) threonine glycosylation is present at threonine 224. Threonine 258 is a glycosylation site (O-linked (GalNAc...) threonine). Threonine 267 carries O-linked (GalNAc...) threonine; partial glycosylation. The O-linked (GalNAc...) threonine glycan is linked to threonine 271. Asparagine 295 carries an N-linked (GlcNAc...) asparagine glycan. A helical transmembrane segment spans residues 306-329; that stretch reads AICFTILGVLTSLVVLGTVAIVFL. Residues 330-385 lie on the Cytoplasmic side of the membrane; sequence NKCETWVSNLRYNHTFRKKKNLLLQYNSGEELAVNIIFPEKIDMTTFNKEAGDEEI.

In terms of assembly, monomer. Interacts with SH3RF2. N- and O-glycosylated. In terms of tissue distribution, highly expressed in fetal liver, placenta, adult adrenal gland, brain, testis and ovary and, to a lesser degree, in adult kidney, muscle, thymus and heart.

The protein localises to the membrane. The protein resides in the cytoplasm. May have a role in neuroendocrine differentiation. Inhibits adipocyte differentiation. This Mus musculus (Mouse) protein is Protein delta homolog 1 (Dlk1).